We begin with the raw amino-acid sequence, 415 residues long: Carboxypeptidase B (415 aa).

The N-terminal stretch at 1–13 is a signal peptide; it reads MLLLLALVSVALA. The propeptide at 14–108 is activation peptide; the sequence is HASEEHFDGN…LESQFDSHTR (95 aa). The region spanning 116–410 is the Peptidase M14 domain; the sequence is KYNKWETIEA…LAVKYIANYV (295 aa). Cysteine 171 and cysteine 184 form a disulfide bridge. Positions 174 and 177 each coordinate Zn(2+). Substrate contacts are provided by residues 174 to 177, arginine 232, and 249 to 250; these read HARE and NR. Disulfide bonds link cysteine 243/cysteine 266 and cysteine 257/cysteine 271. Histidine 302 lines the Zn(2+) pocket. Substrate contacts are provided by residues 303 to 304 and tyrosine 354; that span reads SY. Catalysis depends on glutamate 376, which acts as the Proton donor/acceptor.

Belongs to the peptidase M14 family. Requires Zn(2+) as cofactor.

The protein localises to the secreted. Its subcellular location is the zymogen granule lumen. The catalysed reaction is Preferential release of a C-terminal lysine or arginine amino acid.. In Rattus norvegicus (Rat), this protein is Carboxypeptidase B (Cpb1).